The sequence spans 955 residues: Kinesin-like protein KIN-14L (955 aa).

Positions 19–140 (AARRFQAVQW…CILGLKAYHE (122 aa)) constitute a Calponin-homology (CH) domain. The region spanning 363 to 685 (NIRVYCRVRP…LKFAQRVSTV (323 aa)) is the Kinesin motor domain. An ATP-binding site is contributed by 445–452 (GQTGSGKT). Residues 692–719 (AHKETREVMHLKEQIENLKRALGTEEWN) adopt a coiled-coil conformation. The interval 878–942 (RKENIPADPR…GKPIENGKKD (65 aa)) is disordered. A compositionally biased stretch (polar residues) spans 894 to 916 (NNFSHIKSPDTSNAKTMRRQSLT).

This sequence belongs to the TRAFAC class myosin-kinesin ATPase superfamily. Kinesin family. KIN-14 subfamily.

The polypeptide is Kinesin-like protein KIN-14L (Arabidopsis thaliana (Mouse-ear cress)).